The sequence spans 833 residues: Glycerol-3-phosphate acyltransferase (833 aa).

Residues 310–315 carry the HXXXXD motif motif; it reads HRSHID.

It belongs to the GPAT/DAPAT family.

Its subcellular location is the cell inner membrane. It carries out the reaction sn-glycerol 3-phosphate + an acyl-CoA = a 1-acyl-sn-glycero-3-phosphate + CoA. It participates in phospholipid metabolism; CDP-diacylglycerol biosynthesis; CDP-diacylglycerol from sn-glycerol 3-phosphate: step 1/3. The sequence is that of Glycerol-3-phosphate acyltransferase from Pseudomonas syringae pv. tomato (strain ATCC BAA-871 / DC3000).